The primary structure comprises 153 residues: Transcriptional repressor NrdR (153 aa).

Residues 3 to 34 (CPFCGHLEDRVIDSRAGGAGEVIRRRRECASC) fold into a zinc finger. An ATP-cone domain is found at 49–139 (PTVVKKDGRR…VYRSFRDIDQ (91 aa)).

It belongs to the NrdR family. The cofactor is Zn(2+).

Its function is as follows. Negatively regulates transcription of bacterial ribonucleotide reductase nrd genes and operons by binding to NrdR-boxes. In Sorangium cellulosum (strain So ce56) (Polyangium cellulosum (strain So ce56)), this protein is Transcriptional repressor NrdR.